Here is a 175-residue protein sequence, read N- to C-terminus: DPY30 domain-containing protein 1 (175 aa).

Residues 94–112 (QQKEKQKSEDFETGQEKSF) show a composition bias toward basic and acidic residues. Disordered regions lie at residues 94–134 (QQKE…QAEE) and 152–175 (APNL…SAPP).

This sequence belongs to the dpy-30 family. Component of the axonemal radial spoke complex 1 (RS1), at least composed of spoke head proteins RSPH1, RSPH3, RSPH9 and the cilia-specific component RSPH4A or sperm-specific component RSPH6A, spoke stalk proteins RSPH14, DNAJB13, DYDC1, ROPN1L and NME5, and the anchor protein IQUB. Interacts with SH3GL3.

It is found in the cytoplasm. It localises to the cytoskeleton. The protein localises to the flagellum axoneme. In terms of biological role, functions as part of axonemal radial spoke complexes that play an important part in the motility of sperm and cilia. Plays a crucial role during acrosome biogenesis. The chain is DPY30 domain-containing protein 1 (Dydc1) from Mus musculus (Mouse).